The following is a 681-amino-acid chain: Envelope glycoprotein (681 aa).

The signal sequence occupies residues 1–18 (MKTTCLLISLILIQGVKT). Topologically, residues 19–648 (LPILEIASNI…GLGGKWWTSD (630 aa)) are extracellular. Residues 38-188 (SGTLQKTEDV…FSRQGQGYRH (151 aa)) are receptor-binding. Residues asparagine 94, asparagine 171, asparagine 190, asparagine 202, asparagine 207, asparagine 219, asparagine 223, and asparagine 255 are each glycosylated (N-linked (GlcNAc...) asparagine; by host). Positions 222–424 (KNQTCAPSKK…TSPSPTPNST (203 aa)) are disordered. Polar residues-rich tracts occupy residues 244 to 259 (LTST…TTDP), 278 to 290 (PYTT…KQGL), and 308 to 331 (GGNN…TAQP). Positions 277–455 (EPYTTSDAAT…PFLDGLINAP (179 aa)) are mucin-like region. N-linked (GlcNAc...) asparagine; by host glycans are attached at residues asparagine 310, asparagine 313, asparagine 326, asparagine 337, asparagine 344, asparagine 345, asparagine 350, asparagine 360, asparagine 397, asparagine 408, asparagine 422, and asparagine 487. Residues 337–347 (NTTTISTNNTS) show a composition bias toward low complexity. The segment covering 348–388 (KHNLSTPSVPIQNATNYNTQSTAPENEQTSAPSKTTLLPTE) has biased composition (polar residues). Residues 389–424 (NPTTAKSTNSTKSPTTTVPNTTNKYSTSPSPTPNST) are compositionally biased toward low complexity. A fusion peptide region spans residues 529 to 549 (GLSWIPFFGPGIEGLYTAGLI). 2 N-linked (GlcNAc...) asparagine; by host glycosylation sites follow: asparagine 564 and asparagine 619. The chain crosses the membrane as a helical span at residues 649–669 (WGVLTNLGILLLLSIAVLIAL). Residues 670-681 (SCICRIFTKYIG) lie on the Cytoplasmic side of the membrane. S-palmitoyl cysteine; by host attachment occurs at residues cysteine 671 and cysteine 673.

Belongs to the filoviruses glycoprotein family. As to quaternary structure, homotrimer; each monomer consists of a GP1 and a GP2 subunit linked by disulfide bonds. The resulting peplomers (GP1,2) protrude from the virus surface as spikes. GP1,2 interacts with human CD209 and CLEC4M (collectively referred to as DC-SIGN(R)). Asialoglycoprotein receptor (ASGP-R) may be a liver-specific receptor for GP1,2. Members of the Tyro3 receptor tyrosine kinase family may be cell entry factors interacting with GP1,2. In terms of processing, N-glycosylated. Post-translationally, O-glycosylated in the mucin-like region. Specific enzymatic cleavages in vivo yield mature proteins. The precursor is processed into GP1 and GP2 by host cell furin in the trans Golgi, and maybe by other host proteases, to yield the mature GP1 and GP2 proteins. The cleavage site corresponds to the furin optimal cleavage sequence [KR]-X-[KR]-R. In terms of processing, GP1 is phosphorylated on serine residues between residues 260 and 273.

Its subcellular location is the virion membrane. It localises to the host cell membrane. Its function is as follows. GP1 is responsible for binding to the receptor(s) on target cells. Interacts with CD209/DC-SIGN and CLEC4M/DC-SIGNR which act as cofactors for virus entry into the host cell. Binding to CD209 and CLEC4M, which are respectively found on dendritic cells (DCs), and on endothelial cells of liver sinusoids and lymph node sinuses, facilitate infection of macrophages and endothelial cells. These interactions not only facilitate virus cell entry, but also allow capture of viral particles by DCs and subsequent transmission to susceptible cells without DCs infection (trans infection). Functionally, GP2 acts as a class I viral fusion protein. Under the current model, the protein has at least 3 conformational states: pre-fusion native state, pre-hairpin intermediate state, and post-fusion hairpin state. During viral and target cell membrane fusion, the coiled coil regions (heptad repeats) assume a trimer-of-hairpins structure, positioning the fusion peptide in close proximity to the C-terminal region of the ectodomain. The formation of this structure appears to drive apposition and subsequent fusion of viral and target cell membranes. Responsible for penetration of the virus into the cell cytoplasm by mediating the fusion of the membrane of the endocytosed virus particle with the endosomal membrane. Low pH in endosomes induces an irreversible conformational change in GP2, releasing the fusion hydrophobic peptide. The chain is Envelope glycoprotein (GP) from Chlorocebus aethiops (Green monkey).